The following is a 161-amino-acid chain: Transcription antitermination protein NusB (161 aa).

The segment at 1 to 22 (MNLSDFKPGEGTEVPEEEKSVS) is disordered.

The protein belongs to the NusB family.

Its function is as follows. Involved in transcription antitermination. Required for transcription of ribosomal RNA (rRNA) genes. Binds specifically to the boxA antiterminator sequence of the ribosomal RNA (rrn) operons. This is Transcription antitermination protein NusB from Hydrogenovibrio crunogenus (strain DSM 25203 / XCL-2) (Thiomicrospira crunogena).